The sequence spans 321 residues: Probable UDP-sugar transporter protein SLC35A4 (321 aa).

At 1–22 (MYSVNIEPDGSNHSPSRKRLKQ) the chain is on the cytoplasmic side. The helical transmembrane segment at 23-43 (ILWGLMLVLSVTIYGSHAPLI) threads the bilayer. Residues 44-56 (YLCKVNGEIPFSS) lie on the Lumenal side of the membrane. The helical transmembrane segment at 57 to 77 (SAVVLLIELSKFVISLVFFLI) threads the bilayer. Over 78–91 (QDWKSLKASVSWHL) the chain is Cytoplasmic. Residues 92–112 (AAPYAVPAVLYGANNNLVVYI) form a helical membrane-spanning segment. Topologically, residues 113-119 (QHFMDPS) are lumenal. A helical transmembrane segment spans residues 120–140 (SFQVLSNLKIVSTAVLYSLFL). Over 141–149 (RQRLSVRRW) the chain is Cytoplasmic. The helical transmembrane segment at 150 to 170 (LSVFLLLAAGVFYSYGGIQDL) threads the bilayer. Residues 171 to 180 (EKVSSDTNLY) lie on the Lumenal side of the membrane. The helical transmembrane segment at 181–201 (VTLPGLLLMLAYCLISGLSAV) threads the bilayer. Over 202–211 (YTEMTLKTQK) the chain is Cytoplasmic. Residues 212–232 (IPLNMQNLYLYSFGIIINLTA) form a helical membrane-spanning segment. Over 233 to 247 (HLTSSKNSDFFDGFS) the chain is Lumenal. The helical transmembrane segment at 248 to 268 (VWVWVIILSQALNGLIMSLVM) threads the bilayer. At 269–321 (KLSNNITRLFIISFSMLANGFLSFILFQLQLTALFFLAVVLIGLAVYMYYGMK) the chain is on the cytoplasmic side.

It belongs to the nucleotide-sugar transporter family. SLC35A subfamily.

It is found in the golgi apparatus membrane. It carries out the reaction CDP-L-ribitol(in) + CDP(out) = CDP-L-ribitol(out) + CDP(in). Functionally, mediates the transport of CDP-ribitol. Does not exhibit CMP-sialic acid, UDP-galactose and UDP-N-acetylglucosamine transport activity. The sequence is that of Probable UDP-sugar transporter protein SLC35A4 from Xenopus tropicalis (Western clawed frog).